A 187-amino-acid chain; its full sequence is Elongation factor P 1 (187 aa).

The protein belongs to the elongation factor P family.

It is found in the cytoplasm. It functions in the pathway protein biosynthesis; polypeptide chain elongation. In terms of biological role, involved in peptide bond synthesis. Stimulates efficient translation and peptide-bond synthesis on native or reconstituted 70S ribosomes in vitro. Probably functions indirectly by altering the affinity of the ribosome for aminoacyl-tRNA, thus increasing their reactivity as acceptors for peptidyl transferase. This is Elongation factor P 1 from Geobacter sulfurreducens (strain ATCC 51573 / DSM 12127 / PCA).